Reading from the N-terminus, the 212-residue chain is ATP-dependent dethiobiotin synthetase BioD (212 aa).

13 to 18 contacts ATP; sequence GVGKTV. Thr17 is a binding site for Mg(2+). Lys33 is an active-site residue. Mg(2+) is bound at residue Glu100. ATP contacts are provided by residues 100-103 and 184-186; these read EGAG and PHL.

It belongs to the dethiobiotin synthetase family. As to quaternary structure, homodimer. Mg(2+) serves as cofactor.

It is found in the cytoplasm. The catalysed reaction is (7R,8S)-7,8-diammoniononanoate + CO2 + ATP = (4R,5S)-dethiobiotin + ADP + phosphate + 3 H(+). It functions in the pathway cofactor biosynthesis; biotin biosynthesis; biotin from 7,8-diaminononanoate: step 1/2. Functionally, catalyzes a mechanistically unusual reaction, the ATP-dependent insertion of CO2 between the N7 and N8 nitrogen atoms of 7,8-diaminopelargonic acid (DAPA, also called 7,8-diammoniononanoate) to form a ureido ring. The chain is ATP-dependent dethiobiotin synthetase BioD from Rhodopseudomonas palustris (strain BisB5).